The sequence spans 137 residues: uncharacterized protein (137 aa).

This is an uncharacterized protein from Mycobacterium leprae (strain TN).